The sequence spans 465 residues: Putrescine aminotransferase (465 aa).

Pyridoxal 5'-phosphate is bound by residues 150–151 (GT) and Q274. K300 carries the N6-(pyridoxal phosphate)lysine modification. Pyridoxal 5'-phosphate is bound at residue T332.

The protein belongs to the class-III pyridoxal-phosphate-dependent aminotransferase family. Putrescine aminotransferase subfamily. Pyridoxal 5'-phosphate is required as a cofactor.

The enzyme catalyses an alkane-alpha,omega-diamine + 2-oxoglutarate = an omega-aminoaldehyde + L-glutamate. It catalyses the reaction putrescine + 2-oxoglutarate = 1-pyrroline + L-glutamate + H2O. It carries out the reaction cadaverine + 2-oxoglutarate = 5-aminopentanal + L-glutamate. The protein operates within amine and polyamine degradation; putrescine degradation; 4-aminobutanal from putrescine (transaminase route): step 1/1. In terms of biological role, catalyzes the aminotransferase reaction from putrescine to 2-oxoglutarate, leading to glutamate and 4-aminobutanal, which spontaneously cyclizes to form 1-pyrroline. This is the first step in one of two pathways for putrescine degradation, where putrescine is converted into 4-aminobutanoate (gamma-aminobutyrate or GABA) via 4-aminobutanal. Also functions as a cadaverine transaminase in a a L-lysine degradation pathway to succinate that proceeds via cadaverine, glutarate and L-2-hydroxyglutarate. This is Putrescine aminotransferase from Cronobacter sakazakii (strain ATCC BAA-894) (Enterobacter sakazakii).